The primary structure comprises 248 residues: Triosephosphate isomerase (248 aa).

9–11 (NWK) contributes to the substrate binding site. The Electrophile role is filled by His94. The Proton acceptor role is filled by Glu166. Residues Gly172, Ser212, and 233–234 (GG) each bind substrate.

Belongs to the triosephosphate isomerase family. In terms of assembly, homodimer.

It is found in the cytoplasm. The catalysed reaction is D-glyceraldehyde 3-phosphate = dihydroxyacetone phosphate. The protein operates within carbohydrate biosynthesis; gluconeogenesis. It participates in carbohydrate degradation; glycolysis; D-glyceraldehyde 3-phosphate from glycerone phosphate: step 1/1. Functionally, involved in the gluconeogenesis. Catalyzes stereospecifically the conversion of dihydroxyacetone phosphate (DHAP) to D-glyceraldehyde-3-phosphate (G3P). This chain is Triosephosphate isomerase, found in Clostridium perfringens (strain ATCC 13124 / DSM 756 / JCM 1290 / NCIMB 6125 / NCTC 8237 / Type A).